The sequence spans 157 residues: Crossover junction endodeoxyribonuclease RuvC (157 aa).

Catalysis depends on residues Asp9, Glu70, and Asp142. Mg(2+) is bound by residues Asp9, Glu70, and Asp142.

Belongs to the RuvC family. In terms of assembly, homodimer which binds Holliday junction (HJ) DNA. The HJ becomes 2-fold symmetrical on binding to RuvC with unstacked arms; it has a different conformation from HJ DNA in complex with RuvA. In the full resolvosome a probable DNA-RuvA(4)-RuvB(12)-RuvC(2) complex forms which resolves the HJ. Requires Mg(2+) as cofactor.

The protein resides in the cytoplasm. The catalysed reaction is Endonucleolytic cleavage at a junction such as a reciprocal single-stranded crossover between two homologous DNA duplexes (Holliday junction).. In terms of biological role, the RuvA-RuvB-RuvC complex processes Holliday junction (HJ) DNA during genetic recombination and DNA repair. Endonuclease that resolves HJ intermediates. Cleaves cruciform DNA by making single-stranded nicks across the HJ at symmetrical positions within the homologous arms, yielding a 5'-phosphate and a 3'-hydroxyl group; requires a central core of homology in the junction. The consensus cleavage sequence is 5'-(A/T)TT(C/G)-3'. Cleavage occurs on the 3'-side of the TT dinucleotide at the point of strand exchange. HJ branch migration catalyzed by RuvA-RuvB allows RuvC to scan DNA until it finds its consensus sequence, where it cleaves and resolves the cruciform DNA. This is Crossover junction endodeoxyribonuclease RuvC from Cyanothece sp. (strain PCC 7425 / ATCC 29141).